The chain runs to 433 residues: PC-esterase domain-containing protein 1B (433 aa).

The disordered stretch occupies residues 386–433 (PPCHQRQAPVVHRGFPRHFARGPYSNPWRDRPRRPPKHSPAGLESRPQ).

It belongs to the PC-esterase family.

The chain is PC-esterase domain-containing protein 1B (Pced1b) from Mus musculus (Mouse).